Here is a 162-residue protein sequence, read N- to C-terminus: Regulator of sigma D (162 aa).

It belongs to the Rsd/AlgQ family. In terms of assembly, interacts with RpoD.

Its subcellular location is the cytoplasm. Binds RpoD and negatively regulates RpoD-mediated transcription activation by preventing the interaction between the primary sigma factor RpoD with the catalytic core of the RNA polymerase and with promoter DNA. May be involved in replacement of the RNA polymerase sigma subunit from RpoD to RpoS during the transition from exponential growth to the stationary phase. In Salmonella agona (strain SL483), this protein is Regulator of sigma D.